Reading from the N-terminus, the 337-residue chain is GTP 3',8-cyclase (337 aa).

Residues 17 to 242 (TFQREYYYLR…RQKDRTDGPA (226 aa)) enclose the Radical SAM core domain. Arg-26 is a GTP binding site. Cys-33 and Cys-37 together coordinate [4Fe-4S] cluster. S-adenosyl-L-methionine is bound at residue Tyr-39. Position 40 (Cys-40) interacts with [4Fe-4S] cluster. Position 76 (Arg-76) interacts with GTP. An S-adenosyl-L-methionine-binding site is contributed by Gly-80. Thr-107 serves as a coordination point for GTP. Ser-131 provides a ligand contact to S-adenosyl-L-methionine. A GTP-binding site is contributed by Lys-168. Met-202 is a binding site for S-adenosyl-L-methionine. [4Fe-4S] cluster is bound by residues Cys-265 and Cys-268. Residue 270–272 (RLR) coordinates GTP. A [4Fe-4S] cluster-binding site is contributed by Cys-282.

It belongs to the radical SAM superfamily. MoaA family. In terms of assembly, monomer and homodimer. The cofactor is [4Fe-4S] cluster.

It catalyses the reaction GTP + AH2 + S-adenosyl-L-methionine = (8S)-3',8-cyclo-7,8-dihydroguanosine 5'-triphosphate + 5'-deoxyadenosine + L-methionine + A + H(+). The protein operates within cofactor biosynthesis; molybdopterin biosynthesis. In terms of biological role, catalyzes the cyclization of GTP to (8S)-3',8-cyclo-7,8-dihydroguanosine 5'-triphosphate. In Mannheimia succiniciproducens (strain KCTC 0769BP / MBEL55E), this protein is GTP 3',8-cyclase.